The sequence spans 143 residues: Crossover junction endodeoxyribonuclease Hjc (143 aa).

Residue Glu12 coordinates Mg(2+). Residue Ser32 is part of the active site. 2 residues coordinate Mg(2+): Asp42 and Glu55.

It belongs to the Holliday junction resolvase Hjc family. In terms of assembly, homodimer. Requires Mg(2+) as cofactor.

The enzyme catalyses Endonucleolytic cleavage at a junction such as a reciprocal single-stranded crossover between two homologous DNA duplexes (Holliday junction).. In terms of biological role, a structure-specific endonuclease that resolves Holliday junction (HJ) intermediates during genetic recombination. Cleaves 4-way DNA junctions introducing paired nicks in opposing strands, leaving a 5'-terminal phosphate and a 3'-terminal hydroxyl group that are subsequently ligated to produce recombinant products. Hjc, Hjm (Hel308) and PINA coordinate HJ migration and cleavage of replication forks in a coordinated way. The protein is Crossover junction endodeoxyribonuclease Hjc of Saccharolobus islandicus (strain REY15A) (Sulfolobus islandicus).